We begin with the raw amino-acid sequence, 697 residues long: Elongation factor G (697 aa).

The region spanning 10–285 is the tr-type G domain; that stretch reads EKTRNIGIVA…GVNDYLPSPL (276 aa). Residues 19–26, 83–87, and 137–140 each bind GTP; these read AHIDAGKT, DTPGH, and NKMD.

The protein belongs to the TRAFAC class translation factor GTPase superfamily. Classic translation factor GTPase family. EF-G/EF-2 subfamily.

The protein resides in the cytoplasm. Functionally, catalyzes the GTP-dependent ribosomal translocation step during translation elongation. During this step, the ribosome changes from the pre-translocational (PRE) to the post-translocational (POST) state as the newly formed A-site-bound peptidyl-tRNA and P-site-bound deacylated tRNA move to the P and E sites, respectively. Catalyzes the coordinated movement of the two tRNA molecules, the mRNA and conformational changes in the ribosome. The sequence is that of Elongation factor G from Ligilactobacillus salivarius (strain UCC118) (Lactobacillus salivarius).